The primary structure comprises 261 residues: Uridine-cytidine kinase 2 (261 aa).

Residues 1–16 show a composition bias toward polar residues; sequence MAGDSEQTLQNHQQPN. Residues 1–24 are disordered; the sequence is MAGDSEQTLQNHQQPNGGEPFLIG. Position 2 is an N-acetylalanine (Ala2). Residue 27-35 coordinates ATP; the sequence is GGTASGKSS. Asp84, Tyr112, His117, Arg166, Arg176, and Gln184 together coordinate substrate. Residue Asp213 participates in ATP binding. Residues 240–261 are disordered; the sequence is GYLNGYTPSRKRQASESSSRPH. Ser254 carries the post-translational modification Phosphoserine.

It belongs to the uridine kinase family. In terms of assembly, homotetramer.

The enzyme catalyses uridine + ATP = UMP + ADP + H(+). It carries out the reaction cytidine + ATP = CMP + ADP + H(+). It functions in the pathway pyrimidine metabolism; CTP biosynthesis via salvage pathway; CTP from cytidine: step 1/3. Its pathway is pyrimidine metabolism; UMP biosynthesis via salvage pathway; UMP from uridine: step 1/1. Functionally, phosphorylates uridine and cytidine to uridine monophosphate and cytidine monophosphate. Does not phosphorylate deoxyribonucleosides or purine ribonucleosides. Can use ATP or GTP as a phosphate donor. The chain is Uridine-cytidine kinase 2 (Uck2) from Mus musculus (Mouse).